Here is a 442-residue protein sequence, read N- to C-terminus: Cytokine receptor-like factor 3 (442 aa).

Residues 10–46 (EVLLQEARENVEAAQSYRRELGQRLQGLREAQRQIKE) are a coiled coil. One can recognise a Fibronectin type-III domain in the interval 181–274 (PPVQIEELIE…PQTGHSTLVP (94 aa)).

Belongs to the cytokine receptor-like factor 3 family.

It localises to the cytoplasm. Its function is as follows. May play a role in the negative regulation of cell cycle progression. The chain is Cytokine receptor-like factor 3 (Crlf3) from Mus musculus (Mouse).